The following is a 328-amino-acid chain: uncharacterized protein (328 aa).

The region spanning 37–179 is the SIS domain; it reads LTEKLLCHQG…AMTLLRCRKI (143 aa). 52–57 lines the ATP pocket; the sequence is GIGKSG. CBS domains follow at residues 207 to 264 and 273 to 328; these read PRTE…GGDI and MTRN…AGLL.

Belongs to the SIS family. GutQ/KpsF subfamily.

This is an uncharacterized protein from Chlamydia trachomatis serovar D (strain ATCC VR-885 / DSM 19411 / UW-3/Cx).